We begin with the raw amino-acid sequence, 396 residues long: Elongation factor Tu (396 aa).

A tr-type G domain is found at 10–206 (KPHVNIGTIG…AVDESVPDPV (197 aa)). Residues 19–26 (GHVDHGKT) form a G1 region. 19 to 26 (GHVDHGKT) provides a ligand contact to GTP. Thr26 contacts Mg(2+). Positions 62 to 66 (GITIN) are G2. The interval 83-86 (DAPG) is G3. Residues 83-87 (DAPGH) and 138-141 (NKAD) each bind GTP. A G4 region spans residues 138–141 (NKAD). The segment at 176–178 (SGL) is G5.

This sequence belongs to the TRAFAC class translation factor GTPase superfamily. Classic translation factor GTPase family. EF-Tu/EF-1A subfamily. As to quaternary structure, monomer.

Its subcellular location is the cytoplasm. It catalyses the reaction GTP + H2O = GDP + phosphate + H(+). In terms of biological role, GTP hydrolase that promotes the GTP-dependent binding of aminoacyl-tRNA to the A-site of ribosomes during protein biosynthesis. This is Elongation factor Tu from Arthrobacter sp. (strain FB24).